The chain runs to 59 residues: Potassium channel toxin alpha-KTx 15.5 (59 aa).

The signal sequence occupies residues 1-22 (MKFSSIILLTLLICSMSIFGNC). Residue Gln23 is modified to Pyrrolidone carboxylic acid. Intrachain disulfides connect Cys30/Cys50, Cys35/Cys55, and Cys39/Cys57.

This sequence belongs to the short scorpion toxin superfamily. Potassium channel inhibitor family. Alpha-KTx 15 subfamily. In terms of tissue distribution, expressed by the venom gland.

The protein resides in the secreted. In terms of biological role, blocker of A-type voltage-gated potassium channels of cerebellar granular cells. May also inhibit Kv4/KCND when coexpressed with DPP6 or DPP10. The occlusion of the outer entry of the K(+) conducting pore is partially reversible and affects both open and closed channels. It shares the same target in rat brain than BmTX3 (AC Q8I0L5) and AmmTX3 (AC P60208). The polypeptide is Potassium channel toxin alpha-KTx 15.5 (Androctonus australis (Sahara scorpion)).